The primary structure comprises 284 residues: Bifunctional protein FolD (284 aa).

Residues 166–168 (GAS) and Ile-232 contribute to the NADP(+) site.

The protein belongs to the tetrahydrofolate dehydrogenase/cyclohydrolase family. As to quaternary structure, homodimer.

The enzyme catalyses (6R)-5,10-methylene-5,6,7,8-tetrahydrofolate + NADP(+) = (6R)-5,10-methenyltetrahydrofolate + NADPH. It carries out the reaction (6R)-5,10-methenyltetrahydrofolate + H2O = (6R)-10-formyltetrahydrofolate + H(+). It functions in the pathway one-carbon metabolism; tetrahydrofolate interconversion. Its function is as follows. Catalyzes the oxidation of 5,10-methylenetetrahydrofolate to 5,10-methenyltetrahydrofolate and then the hydrolysis of 5,10-methenyltetrahydrofolate to 10-formyltetrahydrofolate. The polypeptide is Bifunctional protein FolD (Shewanella halifaxensis (strain HAW-EB4)).